Consider the following 389-residue polypeptide: Dirigent protein 25 (389 aa).

The first 21 residues, M1–A21, serve as a signal peptide directing secretion. Composition is skewed to low complexity over residues G50 to G68, L77 to L86, and S98 to T135. Residues G50–T135 are disordered.

This sequence belongs to the plant dirigent protein family. As to quaternary structure, homodimer.

The protein resides in the secreted. The protein localises to the extracellular space. It localises to the apoplast. Its function is as follows. Dirigent proteins impart stereoselectivity on the phenoxy radical-coupling reaction, yielding optically active lignans from two molecules of coniferyl alcohol in the biosynthesis of lignans, flavonolignans, and alkaloids and thus plays a central role in plant secondary metabolism. This Arabidopsis thaliana (Mouse-ear cress) protein is Dirigent protein 25 (DIR25).